The chain runs to 284 residues: 2,3,4,5-tetrahydropyridine-2,6-dicarboxylate N-succinyltransferase (284 aa).

This sequence belongs to the transferase hexapeptide repeat family.

It is found in the cytoplasm. The catalysed reaction is (S)-2,3,4,5-tetrahydrodipicolinate + succinyl-CoA + H2O = (S)-2-succinylamino-6-oxoheptanedioate + CoA. It functions in the pathway amino-acid biosynthesis; L-lysine biosynthesis via DAP pathway; LL-2,6-diaminopimelate from (S)-tetrahydrodipicolinate (succinylase route): step 1/3. The sequence is that of 2,3,4,5-tetrahydropyridine-2,6-dicarboxylate N-succinyltransferase from Brucella abortus (strain S19).